The following is a 229-amino-acid chain: Translation initiation factor 6 (229 aa).

It belongs to the eIF-6 family.

Binds to the 50S ribosomal subunit and prevents its association with the 30S ribosomal subunit to form the 70S initiation complex. The sequence is that of Translation initiation factor 6 from Thermococcus kodakarensis (strain ATCC BAA-918 / JCM 12380 / KOD1) (Pyrococcus kodakaraensis (strain KOD1)).